The chain runs to 354 residues: MSLRKIIHIDCDCFYAAIEMRDDPRLAGRPMAVGGQPGQRGVIATCNYEARAYGVRSAMASGHALKLCPDLEIVKPRFEAYREASRDIHTIFRDYTDLIEPLSLDEAYLDVTDSQWFAGSATRIAEDIRRRVAQQLHITVSAGVAPNKFLAKIASDWRKPNGLFVITPDQVEEFVAQLPVARLHGVGKVTADKLARLGIDTCHALRDWPRLALVREFGSFGERLWGLARGIDERAVQNDSRRQSVSVENTYDHDLPDLNSCLEKLPELLSSLNERIARMDSSYRPDKPFVKVKFHDFSQTTMEQAGAGRDLESYRQLLSQAFARGGKPVRLLGVGVRLRDLRGAHEQLELFGDI.

One can recognise a UmuC domain in the interval 6–187 (IIHIDCDCFY…LPVARLHGVG (182 aa)). Mg(2+) contacts are provided by Asp-10 and Asp-105. Residue Glu-106 is part of the active site.

It belongs to the DNA polymerase type-Y family. Monomer. Mg(2+) is required as a cofactor.

Its subcellular location is the cytoplasm. The catalysed reaction is DNA(n) + a 2'-deoxyribonucleoside 5'-triphosphate = DNA(n+1) + diphosphate. Poorly processive, error-prone DNA polymerase involved in untargeted mutagenesis. Copies undamaged DNA at stalled replication forks, which arise in vivo from mismatched or misaligned primer ends. These misaligned primers can be extended by PolIV. Exhibits no 3'-5' exonuclease (proofreading) activity. May be involved in translesional synthesis, in conjunction with the beta clamp from PolIII. The sequence is that of DNA polymerase IV from Pseudomonas entomophila (strain L48).